The chain runs to 323 residues: Beta-ketoacyl-[acyl-carrier-protein] synthase III (323 aa).

Active-site residues include cysteine 113 and histidine 250. Residues 251 to 255 (QANKR) are ACP-binding. Asparagine 280 is a catalytic residue.

This sequence belongs to the thiolase-like superfamily. FabH family. In terms of assembly, homodimer.

The protein localises to the cytoplasm. It carries out the reaction malonyl-[ACP] + acetyl-CoA + H(+) = 3-oxobutanoyl-[ACP] + CO2 + CoA. It functions in the pathway lipid metabolism; fatty acid biosynthesis. Catalyzes the condensation reaction of fatty acid synthesis by the addition to an acyl acceptor of two carbons from malonyl-ACP. Catalyzes the first condensation reaction which initiates fatty acid synthesis and may therefore play a role in governing the total rate of fatty acid production. Possesses both acetoacetyl-ACP synthase and acetyl transacylase activities. Its substrate specificity determines the biosynthesis of branched-chain and/or straight-chain of fatty acids. This Brucella abortus biovar 1 (strain 9-941) protein is Beta-ketoacyl-[acyl-carrier-protein] synthase III.